A 937-amino-acid chain; its full sequence is Isoleucine--tRNA ligase (937 aa).

A 'HIGH' region motif is present at residues 58–68 (PYANGSIHIGH). Glu561 serves as a coordination point for L-isoleucyl-5'-AMP. Positions 602–606 (KMSKS) match the 'KMSKS' region motif. Position 605 (Lys605) interacts with ATP. Cys900, Cys903, Cys920, and Cys923 together coordinate Zn(2+).

It belongs to the class-I aminoacyl-tRNA synthetase family. IleS type 1 subfamily. As to quaternary structure, monomer. Zn(2+) is required as a cofactor.

The protein resides in the cytoplasm. The enzyme catalyses tRNA(Ile) + L-isoleucine + ATP = L-isoleucyl-tRNA(Ile) + AMP + diphosphate. In terms of biological role, catalyzes the attachment of isoleucine to tRNA(Ile). As IleRS can inadvertently accommodate and process structurally similar amino acids such as valine, to avoid such errors it has two additional distinct tRNA(Ile)-dependent editing activities. One activity is designated as 'pretransfer' editing and involves the hydrolysis of activated Val-AMP. The other activity is designated 'posttransfer' editing and involves deacylation of mischarged Val-tRNA(Ile). The chain is Isoleucine--tRNA ligase from Pectobacterium carotovorum subsp. carotovorum (strain PC1).